Consider the following 132-residue polypeptide: Small ribosomal subunit protein uS8 (132 aa).

It belongs to the universal ribosomal protein uS8 family. As to quaternary structure, part of the 30S ribosomal subunit. Contacts proteins S5 and S12.

One of the primary rRNA binding proteins, it binds directly to 16S rRNA central domain where it helps coordinate assembly of the platform of the 30S subunit. This is Small ribosomal subunit protein uS8 from Stenotrophomonas maltophilia (strain K279a).